A 393-amino-acid chain; its full sequence is Serine/threonine protein kinase AFUB_078980 (393 aa).

Positions 61 to 390 constitute a Protein kinase domain; it reads YQVLSKLGFG…APELLTDPWL (330 aa). ATP-binding positions include 67-75 and Lys-90; that span reads LGFGANSTV. The Proton acceptor role is filled by Asp-190.

This sequence belongs to the protein kinase superfamily. CMGC Ser/Thr protein kinase family.

It carries out the reaction L-seryl-[protein] + ATP = O-phospho-L-seryl-[protein] + ADP + H(+). The enzyme catalyses L-threonyl-[protein] + ATP = O-phospho-L-threonyl-[protein] + ADP + H(+). Functionally, serine/threonine protein kinase; part of the subtelomeric hrmA-associated cluster (HAC) containing genes that alter the hyphal surface (such as reduced total chitin or increased beta-glucan exposure) and perturb inter-hyphal interactions within the developing biofilms, resulting in a loss of vertically aligned polarized growing filaments. Consequently, this hypoxia-typic morphotype (called H-MORPH) with altered biofilm architecture leads to increased hypoxia fitness, increased host inflammation, rapid disease progression, and mortality in a murine model of invasive aspergillosis. The sequence is that of Serine/threonine protein kinase AFUB_078980 from Aspergillus fumigatus (strain CBS 144.89 / FGSC A1163 / CEA10) (Neosartorya fumigata).